A 1406-amino-acid polypeptide reads, in one-letter code: DNA-directed RNA polymerase subunit beta' (1406 aa).

Residues cysteine 72, cysteine 74, cysteine 87, and cysteine 90 each contribute to the Zn(2+) site. Aspartate 462, aspartate 464, and aspartate 466 together coordinate Mg(2+). Residues cysteine 816, cysteine 891, cysteine 898, and cysteine 901 each contribute to the Zn(2+) site.

The protein belongs to the RNA polymerase beta' chain family. As to quaternary structure, the RNAP catalytic core consists of 2 alpha, 1 beta, 1 beta' and 1 omega subunit. When a sigma factor is associated with the core the holoenzyme is formed, which can initiate transcription. Mg(2+) is required as a cofactor. Zn(2+) serves as cofactor.

The enzyme catalyses RNA(n) + a ribonucleoside 5'-triphosphate = RNA(n+1) + diphosphate. DNA-dependent RNA polymerase catalyzes the transcription of DNA into RNA using the four ribonucleoside triphosphates as substrates. This Psychrobacter arcticus (strain DSM 17307 / VKM B-2377 / 273-4) protein is DNA-directed RNA polymerase subunit beta'.